Consider the following 131-residue polypeptide: C-type natriuretic peptide (131 aa).

A signal peptide spans 1-20 (MMCKALVFAVLLLAVPLERA). Residues 21-109 (DSRALRTPVD…KRALPDRAKR (89 aa)) constitute a propeptide that is removed on maturation. Cysteines 115 and 131 form a disulfide.

The protein belongs to the natriuretic peptide family. In terms of tissue distribution, highly expressed in brain and liver, and moderately in gut, gills and heart. Expressed to a low level in atrium, ventricle and liver of fresh water eels.

It localises to the secreted. Functionally, hormone which plays a role in endochondral ossification through regulation of cartilaginous growth plate chondrocytes proliferation and differentiation. May also be vasoactive and natriuretic. May be important for freshwater adaptation. In Anguilla japonica (Japanese eel), this protein is C-type natriuretic peptide (cnp).